Reading from the N-terminus, the 277-residue chain is Putative phosphoenolpyruvate synthase regulatory protein (277 aa).

Position 156–163 (156–163 (GVSRAGKT)) interacts with ADP.

Belongs to the pyruvate, phosphate/water dikinase regulatory protein family. PSRP subfamily.

The enzyme catalyses [pyruvate, water dikinase] + ADP = [pyruvate, water dikinase]-phosphate + AMP + H(+). The catalysed reaction is [pyruvate, water dikinase]-phosphate + phosphate + H(+) = [pyruvate, water dikinase] + diphosphate. Its function is as follows. Bifunctional serine/threonine kinase and phosphorylase involved in the regulation of the phosphoenolpyruvate synthase (PEPS) by catalyzing its phosphorylation/dephosphorylation. The chain is Putative phosphoenolpyruvate synthase regulatory protein from Deinococcus radiodurans (strain ATCC 13939 / DSM 20539 / JCM 16871 / CCUG 27074 / LMG 4051 / NBRC 15346 / NCIMB 9279 / VKM B-1422 / R1).